A 347-amino-acid chain; its full sequence is Protease HtpX homolog (347 aa).

The next 3 helical transmembrane spans lie at 8 to 28 (IAFG…VVIA), 46 to 66 (ALTA…IAIV), and 76 to 96 (WGFI…TYIA). Position 174 (histidine 174) interacts with Zn(2+). The active site involves glutamate 175. Histidine 178 lines the Zn(2+) pocket. Transmembrane regions (helical) follow at residues 185–205 (ALML…VSSV) and 221–241 (LLAA…LLVL). Position 248 (glutamate 248) interacts with Zn(2+).

Belongs to the peptidase M48B family. The cofactor is Zn(2+).

The protein localises to the cell membrane. The chain is Protease HtpX homolog from Pyrobaculum islandicum (strain DSM 4184 / JCM 9189 / GEO3).